The primary structure comprises 210 residues: tRNA (guanine-N(7)-)-methyltransferase (210 aa).

Residues Glu-43, Glu-68, Asp-95, and Asp-117 each contribute to the S-adenosyl-L-methionine site. Asp-117 is an active-site residue. Residues Lys-121, Asp-153, and Thr-190 to Glu-193 each bind substrate.

It belongs to the class I-like SAM-binding methyltransferase superfamily. TrmB family.

It catalyses the reaction guanosine(46) in tRNA + S-adenosyl-L-methionine = N(7)-methylguanosine(46) in tRNA + S-adenosyl-L-homocysteine. It participates in tRNA modification; N(7)-methylguanine-tRNA biosynthesis. Functionally, catalyzes the formation of N(7)-methylguanine at position 46 (m7G46) in tRNA. The polypeptide is tRNA (guanine-N(7)-)-methyltransferase (Macrococcus caseolyticus (strain JCSC5402) (Macrococcoides caseolyticum)).